A 431-amino-acid polypeptide reads, in one-letter code: Adenylosuccinate synthetase (431 aa).

GTP is bound by residues 13–19 and 41–43; these read GDEGKGK and GHT. Catalysis depends on aspartate 14, which acts as the Proton acceptor. Aspartate 14 and glycine 41 together coordinate Mg(2+). IMP is bound by residues 14-17, 39-42, threonine 130, arginine 144, glutamine 225, threonine 240, and arginine 304; these read DEGK and NAGH. Histidine 42 serves as the catalytic Proton donor. Position 300 to 306 (300 to 306) interacts with substrate; sequence ATTGRKR. GTP contacts are provided by residues arginine 306, 332–334, and 415–417; these read KLD and STG.

It belongs to the adenylosuccinate synthetase family. As to quaternary structure, homodimer. The cofactor is Mg(2+).

It localises to the cytoplasm. It catalyses the reaction IMP + L-aspartate + GTP = N(6)-(1,2-dicarboxyethyl)-AMP + GDP + phosphate + 2 H(+). Its pathway is purine metabolism; AMP biosynthesis via de novo pathway; AMP from IMP: step 1/2. In terms of biological role, plays an important role in the de novo pathway of purine nucleotide biosynthesis. Catalyzes the first committed step in the biosynthesis of AMP from IMP. The sequence is that of Adenylosuccinate synthetase from Shewanella loihica (strain ATCC BAA-1088 / PV-4).